The following is a 494-amino-acid chain: Transmembrane and coiled-coil domain-containing protein 6 (494 aa).

Residues 15 to 39 (GVEELRRRRREREAALRKARREQQL) are a coiled coil. 2 helical membrane-spanning segments follow: residues 338 to 358 (LVAA…ALLP) and 386 to 406 (PLLQ…TVLC).

It localises to the membrane. This chain is Transmembrane and coiled-coil domain-containing protein 6 (Tmco6), found in Mus musculus (Mouse).